Consider the following 395-residue polypeptide: S-adenosylmethionine synthase 5 (395 aa).

Glutamate 10 contacts Mg(2+). Histidine 16 contributes to the ATP binding site. Glutamate 44 contacts K(+). Positions 57 and 100 each coordinate L-methionine. Residues 168–170 (DGK), 236–239 (SGRF), aspartate 247, 253–254 (RK), alanine 270, lysine 274, and lysine 278 each bind ATP. Aspartate 247 lines the L-methionine pocket. Position 278 (lysine 278) interacts with L-methionine.

This sequence belongs to the AdoMet synthase family. Homotetramer. Mn(2+) serves as cofactor. Requires Mg(2+) as cofactor. Co(2+) is required as a cofactor. It depends on K(+) as a cofactor.

The protein localises to the cytoplasm. It catalyses the reaction L-methionine + ATP + H2O = S-adenosyl-L-methionine + phosphate + diphosphate. Its pathway is amino-acid biosynthesis; S-adenosyl-L-methionine biosynthesis; S-adenosyl-L-methionine from L-methionine: step 1/1. In terms of biological role, catalyzes the formation of S-adenosylmethionine from methionine and ATP. The reaction comprises two steps that are both catalyzed by the same enzyme: formation of S-adenosylmethionine (AdoMet) and triphosphate, and subsequent hydrolysis of the triphosphate. This is S-adenosylmethionine synthase 5 (METK5) from Populus trichocarpa (Western balsam poplar).